Consider the following 253-residue polypeptide: uncharacterized protein (253 aa).

Residues isoleucine 17, serine 36, aspartate 62, asparagine 89, tyrosine 158, lysine 162, valine 191, and threonine 193 each coordinate NADP(+). Residue tyrosine 158 is the Proton donor of the active site. Lysine 162 serves as the catalytic Lowers pKa of active site Tyr.

It belongs to the short-chain dehydrogenases/reductases (SDR) family.

It is found in the cytoplasm. The protein resides in the nucleus. This is an uncharacterized protein from Schizosaccharomyces pombe (strain 972 / ATCC 24843) (Fission yeast).